Consider the following 181-residue polypeptide: Cyclic AMP-dependent transcription factor ATF-3 (181 aa).

Residues 76-97 (VTKAEVAPEEDERKKRRRERNK) form a disordered region. A Glycyl lysine isopeptide (Lys-Gly) (interchain with G-Cter in SUMO2) cross-link involves residue Lys78. The bZIP domain maps to 86–149 (DERKKRRRER…QHLIYMLNLH (64 aa)). The segment at 88-110 (RKKRRRERNKIAAAKCRNKKKEK) is basic motif. Residues 114–142 (LQKESEKLESVNAELKAQIEELKNEKQHL) form a leucine-zipper region. Thr162 bears the Phosphothreonine mark. A Glycyl lysine isopeptide (Lys-Gly) (interchain with G-Cter in SUMO2) cross-link involves residue Lys175.

The protein belongs to the bZIP family. ATF subfamily. In terms of assembly, binds DNA as a homodimer or a heterodimer. Interacts with KAT5; promoting KAT5 autoacetylation and KAT5 deubiquitination by USP7.

Its subcellular location is the nucleus. This protein binds the cAMP response element (CRE) (consensus: 5'-GTGACGT[AC][AG]-3'), a sequence present in many viral and cellular promoters. Represses transcription from promoters with ATF sites. It may repress transcription by stabilizing the binding of inhibitory cofactors at the promoter. This is Cyclic AMP-dependent transcription factor ATF-3 (ATF3) from Bos taurus (Bovine).